Here is a 513-residue protein sequence, read N- to C-terminus: Noroxomaritidine synthase 2 (513 aa).

The helical transmembrane segment at 14–34 threads the bilayer; it reads HYPEILIAIACFLIFSLLLSA. C458 is a heme binding site.

It belongs to the cytochrome P450 family. Heme is required as a cofactor. As to expression, mostly expressed in stems, and, to a lower extent, in bulbs, roots, leaves and flowers.

Its subcellular location is the membrane. The enzyme catalyses 4'-O-methylnorbelladine + reduced [NADPH--hemoprotein reductase] + O2 = (10bR,4aS)-noroxomaritidine + oxidized [NADPH--hemoprotein reductase] + 2 H2O + H(+). The catalysed reaction is 4'-O-methylnorbelladine + reduced [NADPH--hemoprotein reductase] + O2 = (10bS,4aR)-noroxomaritidine + oxidized [NADPH--hemoprotein reductase] + 2 H2O + H(+). Its pathway is alkaloid biosynthesis. In terms of biological role, cytochrome P450 that catalyzes an intramolecular para-para' C-C phenol coupling of 4'-O-methylnorbelladine in alkaloids biosynthesis, including haemanthamine- and crinamine-type alkaloids, promising anticancer agents. Catalyzes the formation of (10bR,4aS)-noroxomaritidine and (10bS,4aR)-noroxomaritidine from 4'-O-methylnorbelladine. This Narcissus pseudonarcissus (Daffodil) protein is Noroxomaritidine synthase 2.